Reading from the N-terminus, the 92-residue chain is uncharacterized protein (92 aa).

This is an uncharacterized protein from Methanocaldococcus jannaschii (strain ATCC 43067 / DSM 2661 / JAL-1 / JCM 10045 / NBRC 100440) (Methanococcus jannaschii).